We begin with the raw amino-acid sequence, 156 residues long: ATP synthase subunit b (156 aa).

The chain crosses the membrane as a helical span at residues 7–27 (LFVQAIVFLILVLFTMKFVWP).

It belongs to the ATPase B chain family. As to quaternary structure, F-type ATPases have 2 components, F(1) - the catalytic core - and F(0) - the membrane proton channel. F(1) has five subunits: alpha(3), beta(3), gamma(1), delta(1), epsilon(1). F(0) has three main subunits: a(1), b(2) and c(10-14). The alpha and beta chains form an alternating ring which encloses part of the gamma chain. F(1) is attached to F(0) by a central stalk formed by the gamma and epsilon chains, while a peripheral stalk is formed by the delta and b chains.

The protein resides in the cell inner membrane. Its function is as follows. F(1)F(0) ATP synthase produces ATP from ADP in the presence of a proton or sodium gradient. F-type ATPases consist of two structural domains, F(1) containing the extramembraneous catalytic core and F(0) containing the membrane proton channel, linked together by a central stalk and a peripheral stalk. During catalysis, ATP synthesis in the catalytic domain of F(1) is coupled via a rotary mechanism of the central stalk subunits to proton translocation. Functionally, component of the F(0) channel, it forms part of the peripheral stalk, linking F(1) to F(0). This Delftia acidovorans (strain DSM 14801 / SPH-1) protein is ATP synthase subunit b.